A 303-amino-acid polypeptide reads, in one-letter code: Holdfast attachment protein D (303 aa).

The segment covering 266-281 has biased composition (polar residues); sequence SARSTMSGPKSCSTTF. Residues 266-303 form a disordered region; the sequence is SARSTMSGPKSCSTTFRPIRAAASRRPPASAGTRAMTR. A compositionally biased stretch (low complexity) spans 282 to 303; it reads RPIRAAASRRPPASAGTRAMTR.

The protein resides in the cell outer membrane. Involved in attachment of the holdfast to the cell. The holdfast is a structure that allows the bacteria to firmly adhere to surfaces. The chain is Holdfast attachment protein D (hfaD) from Caulobacter vibrioides (strain ATCC 19089 / CIP 103742 / CB 15) (Caulobacter crescentus).